A 116-amino-acid chain; its full sequence is Prefoldin subunit beta (116 aa).

Belongs to the prefoldin subunit beta family. As to quaternary structure, heterohexamer of two alpha and four beta subunits.

It localises to the cytoplasm. Functionally, molecular chaperone capable of stabilizing a range of proteins. Seems to fulfill an ATP-independent, HSP70-like function in archaeal de novo protein folding. This Methanobrevibacter smithii (strain ATCC 35061 / DSM 861 / OCM 144 / PS) protein is Prefoldin subunit beta.